The sequence spans 369 residues: Glycerol-3-phosphate dehydrogenase [NAD(P)+] (369 aa).

Residues S6, W7, R27, R28, and K101 each contribute to the NADPH site. Residues K101 and G131 each coordinate sn-glycerol 3-phosphate. Residue A135 participates in NADPH binding. Sn-glycerol 3-phosphate contacts are provided by K186, D239, S249, R250, and N251. The active-site Proton acceptor is the K186. R250 provides a ligand contact to NADPH. Position 276 (E276) interacts with NADPH. Residues 312–369 are disordered; the sequence is KDIAPHLTTDDEPQGERTRGERTTDDGQGQGRTSVWGSLKRAFDQLRDGGGSSRRDRP. 2 stretches are compositionally biased toward basic and acidic residues: residues 325-336 and 352-369; these read QGERTRGERTTD and RAFD…RDRP.

It belongs to the NAD-dependent glycerol-3-phosphate dehydrogenase family.

The protein localises to the cytoplasm. The enzyme catalyses sn-glycerol 3-phosphate + NAD(+) = dihydroxyacetone phosphate + NADH + H(+). It carries out the reaction sn-glycerol 3-phosphate + NADP(+) = dihydroxyacetone phosphate + NADPH + H(+). The protein operates within membrane lipid metabolism; glycerophospholipid metabolism. In terms of biological role, catalyzes the reduction of the glycolytic intermediate dihydroxyacetone phosphate (DHAP) to sn-glycerol 3-phosphate (G3P), the key precursor for phospholipid synthesis. The protein is Glycerol-3-phosphate dehydrogenase [NAD(P)+] of Leifsonia xyli subsp. xyli (strain CTCB07).